The sequence spans 109 residues: Large ribosomal subunit protein uL22 (109 aa).

Belongs to the universal ribosomal protein uL22 family. In terms of assembly, part of the 50S ribosomal subunit.

This protein binds specifically to 23S rRNA; its binding is stimulated by other ribosomal proteins, e.g. L4, L17, and L20. It is important during the early stages of 50S assembly. It makes multiple contacts with different domains of the 23S rRNA in the assembled 50S subunit and ribosome. Functionally, the globular domain of the protein is located near the polypeptide exit tunnel on the outside of the subunit, while an extended beta-hairpin is found that lines the wall of the exit tunnel in the center of the 70S ribosome. In Cupriavidus necator (strain ATCC 17699 / DSM 428 / KCTC 22496 / NCIMB 10442 / H16 / Stanier 337) (Ralstonia eutropha), this protein is Large ribosomal subunit protein uL22.